The chain runs to 334 residues: L-lactate dehydrogenase B chain (334 aa).

Ala2 bears the N-acetylalanine mark. At Lys7 the chain carries N6-acetyllysine. An NAD(+)-binding site is contributed by 31-53; the sequence is QVGMACAISILGKSLADELALVD. Ser44 is modified (phosphoserine). Lys58 is modified (N6-acetyllysine). Arg100 contacts NAD(+). Arg107 provides a ligand contact to substrate. Lys119 is subject to N6-acetyllysine. Asn139 serves as a coordination point for NAD(+). Residues Asn139 and Arg170 each contribute to the substrate site. The Proton acceptor role is filled by His194. Phosphotyrosine is present on Tyr240. Position 249 (Thr249) interacts with substrate. Lys329 is modified (N6-acetyllysine).

This sequence belongs to the LDH/MDH superfamily. LDH family. In terms of assembly, homotetramer. Interacts with PTEN upstream reading frame protein MP31; the interaction leads to inhibition of mitochondrial lactate dehydrogenase activity, preventing conversion of lactate to pyruvate in mitochondria. In terms of tissue distribution, predominantly expressed in aerobic tissues such as cardiac muscle.

Its subcellular location is the cytoplasm. The protein resides in the mitochondrion inner membrane. It catalyses the reaction (S)-lactate + NAD(+) = pyruvate + NADH + H(+). It participates in fermentation; pyruvate fermentation to lactate; (S)-lactate from pyruvate: step 1/1. Its function is as follows. Interconverts simultaneously and stereospecifically pyruvate and lactate with concomitant interconversion of NADH and NAD(+). The protein is L-lactate dehydrogenase B chain (LDHB) of Homo sapiens (Human).